A 591-amino-acid chain; its full sequence is Oxaloacetate decarboxylase alpha chain (591 aa).

Residues 3–263 enclose the Pyruvate carboxyltransferase domain; it reads IAITDVVLRD…DTGLDILKLE (261 aa). Positions 518–591 constitute a Biotinyl-binding domain; sequence PAGAGTPVTA…SVGDTLMTLA (74 aa). Lys-557 is subject to N6-biotinyllysine.

Composed of three chains (alpha, beta, and gamma). The cofactor is biotin.

It carries out the reaction oxaloacetate + 2 Na(+)(in) + H(+) = pyruvate + 2 Na(+)(out) + CO2. Catalyzes the decarboxylation of oxaloacetate coupled to Na(+) translocation. This Salmonella typhi protein is Oxaloacetate decarboxylase alpha chain (oadA1).